Reading from the N-terminus, the 609-residue chain is Alpha-glycerophosphate oxidase (609 aa).

21 to 49 (DLLVIGGGITGAGLTLQAAAAGMKVAVLE) serves as a coordination point for FAD.

Belongs to the FAD-dependent glycerol-3-phosphate dehydrogenase family. Requires FAD as cofactor.

It is found in the cytoplasm. The catalysed reaction is sn-glycerol 3-phosphate + O2 = dihydroxyacetone phosphate + H2O2. The protein is Alpha-glycerophosphate oxidase (glpO) of Lactococcus lactis subsp. lactis (strain IL1403) (Streptococcus lactis).